The following is a 64-amino-acid chain: Large ribosomal subunit protein bL35 (64 aa).

The protein belongs to the bacterial ribosomal protein bL35 family.

In Shewanella baltica (strain OS223), this protein is Large ribosomal subunit protein bL35.